Here is a 644-residue protein sequence, read N- to C-terminus: Macrolide export ATP-binding/permease protein MacB (644 aa).

An ABC transporter domain is found at 4 to 242; the sequence is IECKNINRYF…SNVGRIQEKA (239 aa). 40 to 47 is an ATP binding site; it reads GQSGSGKS. The next 4 membrane-spanning stretches (helical) occupy residues 270–290, 524–544, 574–594, and 607–627; these read LLTMLGIIIGIASVVSVVALG, IALISLVVGGIGVMNIMLVSV, LICIIGGLVGVGLSAAVSLVF, and AASVIGAVACSTGIGIAFGFM.

It belongs to the ABC transporter superfamily. Macrolide exporter (TC 3.A.1.122) family. As to quaternary structure, homodimer.

Its subcellular location is the cell inner membrane. In terms of biological role, non-canonical ABC transporter that contains transmembrane domains (TMD), which form a pore in the inner membrane, and an ATP-binding domain (NBD), which is responsible for energy generation. Overexpression confers resistance against macrolides. The chain is Macrolide export ATP-binding/permease protein MacB from Neisseria gonorrhoeae.